The primary structure comprises 146 residues: Ribonuclease H (146 aa).

Residues 1 to 143 enclose the RNase H type-1 domain; the sequence is MQKKITIYTD…CDELARQAIQ (143 aa). 4 residues coordinate Mg(2+): Asp10, Glu48, Asp70, and Asp135.

It belongs to the RNase H family. As to quaternary structure, monomer. Requires Mg(2+) as cofactor.

It localises to the cytoplasm. The enzyme catalyses Endonucleolytic cleavage to 5'-phosphomonoester.. Its function is as follows. Endonuclease that specifically degrades the RNA of RNA-DNA hybrids. The sequence is that of Ribonuclease H from Chlorobium luteolum (strain DSM 273 / BCRC 81028 / 2530) (Pelodictyon luteolum).